The primary structure comprises 385 residues: Meiotic recombination protein SPO11-2 (385 aa).

The region spanning 24-169 (LPPAEVRARI…LGIMASSRGA (146 aa)) is the Topo IIA-type catalytic domain. Tyrosine 126 acts as the O-(5'-phospho-DNA)-tyrosine intermediate in catalysis. Mg(2+)-binding residues include glutamate 219 and aspartate 272.

The protein belongs to the TOP6A family. In terms of assembly, interacts with TOP6B. It depends on Mg(2+) as a cofactor. In terms of tissue distribution, highly expressed in flowers before pollination. Expressed in roots and shoots.

Its subcellular location is the nucleus. The catalysed reaction is ATP-dependent breakage, passage and rejoining of double-stranded DNA.. Its function is as follows. Required for meiotic recombination. Mediates DNA cleavage that forms the double-strand breaks (DSB) that initiate meiotic recombination. This chain is Meiotic recombination protein SPO11-2 (SPO11-2), found in Oryza sativa subsp. indica (Rice).